Consider the following 230-residue polypeptide: Large ribosomal subunit protein uL1 (230 aa).

Belongs to the universal ribosomal protein uL1 family. As to quaternary structure, part of the 50S ribosomal subunit.

Its function is as follows. Binds directly to 23S rRNA. The L1 stalk is quite mobile in the ribosome, and is involved in E site tRNA release. Protein L1 is also a translational repressor protein, it controls the translation of the L11 operon by binding to its mRNA. This Thermoanaerobacter sp. (strain X514) protein is Large ribosomal subunit protein uL1.